We begin with the raw amino-acid sequence, 600 residues long: DNA mismatch repair protein MutL (600 aa).

A disordered region spans residues Q348–S375. A compositionally biased stretch (polar residues) spans P349 to T362.

The protein belongs to the DNA mismatch repair MutL/HexB family.

Its function is as follows. This protein is involved in the repair of mismatches in DNA. It is required for dam-dependent methyl-directed DNA mismatch repair. May act as a 'molecular matchmaker', a protein that promotes the formation of a stable complex between two or more DNA-binding proteins in an ATP-dependent manner without itself being part of a final effector complex. The chain is DNA mismatch repair protein MutL from Rhizobium leguminosarum bv. trifolii (strain WSM2304).